A 342-amino-acid chain; its full sequence is S-adenosylmethionine:tRNA ribosyltransferase-isomerase (342 aa).

This sequence belongs to the QueA family. As to quaternary structure, monomer.

It localises to the cytoplasm. The catalysed reaction is 7-aminomethyl-7-carbaguanosine(34) in tRNA + S-adenosyl-L-methionine = epoxyqueuosine(34) in tRNA + adenine + L-methionine + 2 H(+). It functions in the pathway tRNA modification; tRNA-queuosine biosynthesis. Transfers and isomerizes the ribose moiety from AdoMet to the 7-aminomethyl group of 7-deazaguanine (preQ1-tRNA) to give epoxyqueuosine (oQ-tRNA). The sequence is that of S-adenosylmethionine:tRNA ribosyltransferase-isomerase from Streptococcus mutans serotype c (strain ATCC 700610 / UA159).